A 472-amino-acid chain; its full sequence is Phosphoenolpyruvate carboxykinase (ATP), glycosomal (472 aa).

ATP is bound at residue 221–228; it reads GLSGTGKT.

Belongs to the phosphoenolpyruvate carboxykinase (ATP) family. In terms of assembly, homodimer.

The protein localises to the glycosome. It catalyses the reaction oxaloacetate + ATP = phosphoenolpyruvate + ADP + CO2. It participates in carbohydrate biosynthesis; gluconeogenesis. P60 has the capability to bind to microtubules and membrane vesicles in vitro. This chain is Phosphoenolpyruvate carboxykinase (ATP), glycosomal, found in Trypanosoma brucei brucei.